The following is a 134-amino-acid chain: Acyl carrier protein SF2, chloroplastic (134 aa).

The N-terminal 51 residues, 1-51 (MSTTFCSSVSMQATSLAATTRISFQKPALVSTTNLSFNLRRSIPTRFSISC), are a transit peptide targeting the chloroplast. The Carrier domain maps to 55–130 (PETVEKVSKI…EAAELIEELV (76 aa)). Ser-90 carries the post-translational modification O-(pantetheine 4'-phosphoryl)serine.

The protein belongs to the acyl carrier protein (ACP) family. Post-translationally, 4'-phosphopantetheine is transferred from CoA to a specific serine of apo-ACP by acpS. This modification is essential for activity because fatty acids are bound in thioester linkage to the sulfhydryl of the prosthetic group.

The protein resides in the plastid. The protein localises to the chloroplast. It participates in lipid metabolism; fatty acid biosynthesis. Functionally, carrier of the growing fatty acid chain in fatty acid biosynthesis. The protein is Acyl carrier protein SF2, chloroplastic (Acl1.1) of Brassica campestris (Field mustard).